Here is a 99-residue protein sequence, read N- to C-terminus: Small ribosomal subunit protein uS19 (99 aa).

The disordered stretch occupies residues Pro-76–Lys-99.

It belongs to the universal ribosomal protein uS19 family.

In terms of biological role, protein S19 forms a complex with S13 that binds strongly to the 16S ribosomal RNA. In Pelodictyon phaeoclathratiforme (strain DSM 5477 / BU-1), this protein is Small ribosomal subunit protein uS19.